The following is a 333-amino-acid chain: Global transcription regulator sge1 (333 aa).

Disordered regions lie at residues 93–139 (PPGE…PSVP) and 241–307 (QHQS…PQYQ).

Belongs to the MIT1/WOR1 family.

It localises to the nucleus. Functionally, global transcriptional regulator that acts as an activator of secondary metabolism. Required for expression of a yet uncharacterized secondary metabolism gene cluster containing a non-canonical non-ribosomal peptide synthetase. Not required for conidiogenesis nor for pathogenicity, but is involved in vegetative growth. This Gibberella fujikuroi (strain CBS 195.34 / IMI 58289 / NRRL A-6831) (Bakanae and foot rot disease fungus) protein is Global transcription regulator sge1.